The following is a 556-amino-acid chain: Arginine--tRNA ligase (556 aa).

The 'HIGH' region signature appears at Pro117–His127.

The protein belongs to the class-I aminoacyl-tRNA synthetase family. Monomer.

Its subcellular location is the cytoplasm. The catalysed reaction is tRNA(Arg) + L-arginine + ATP = L-arginyl-tRNA(Arg) + AMP + diphosphate. In Cutibacterium acnes (strain DSM 16379 / KPA171202) (Propionibacterium acnes), this protein is Arginine--tRNA ligase.